Consider the following 156-residue polypeptide: Cyclic pyranopterin monophosphate synthase (156 aa).

Substrate is bound by residues 73–75 and 110–111; these read LCH and ME. Aspartate 125 is a catalytic residue.

The protein belongs to the MoaC family. In terms of assembly, homohexamer; trimer of dimers.

The catalysed reaction is (8S)-3',8-cyclo-7,8-dihydroguanosine 5'-triphosphate = cyclic pyranopterin phosphate + diphosphate. It functions in the pathway cofactor biosynthesis; molybdopterin biosynthesis. In terms of biological role, catalyzes the conversion of (8S)-3',8-cyclo-7,8-dihydroguanosine 5'-triphosphate to cyclic pyranopterin monophosphate (cPMP). The protein is Cyclic pyranopterin monophosphate synthase of Pseudomonas entomophila (strain L48).